The following is a 185-amino-acid chain: Large ribosomal subunit protein uL5 (185 aa).

The protein belongs to the universal ribosomal protein uL5 family. Part of the 50S ribosomal subunit; part of the 5S rRNA/L5/L18/L25 subcomplex. Contacts the 5S rRNA and the P site tRNA. Forms a bridge to the 30S subunit in the 70S ribosome.

In terms of biological role, this is one of the proteins that bind and probably mediate the attachment of the 5S RNA into the large ribosomal subunit, where it forms part of the central protuberance. In the 70S ribosome it contacts protein S13 of the 30S subunit (bridge B1b), connecting the 2 subunits; this bridge is implicated in subunit movement. Contacts the P site tRNA; the 5S rRNA and some of its associated proteins might help stabilize positioning of ribosome-bound tRNAs. The protein is Large ribosomal subunit protein uL5 of Bacteroides fragilis (strain ATCC 25285 / DSM 2151 / CCUG 4856 / JCM 11019 / LMG 10263 / NCTC 9343 / Onslow / VPI 2553 / EN-2).